Consider the following 305-residue polypeptide: D-alanine--D-alanine ligase (305 aa).

The 193-residue stretch at 107–299 (KKMLCYHGIA…FDELVERILA (193 aa)) folds into the ATP-grasp domain. 134-186 (PDYPLVVKPAREGSTIGISIVHDEQELAAGLEEAFRHDDLVLVEQFIAGAEVT) is an ATP binding site. 3 residues coordinate Mg(2+): D254, E266, and N268.

It belongs to the D-alanine--D-alanine ligase family. Mg(2+) is required as a cofactor. Mn(2+) serves as cofactor.

The protein localises to the cytoplasm. It carries out the reaction 2 D-alanine + ATP = D-alanyl-D-alanine + ADP + phosphate + H(+). The protein operates within cell wall biogenesis; peptidoglycan biosynthesis. Cell wall formation. This Syntrophotalea carbinolica (strain DSM 2380 / NBRC 103641 / GraBd1) (Pelobacter carbinolicus) protein is D-alanine--D-alanine ligase.